A 186-amino-acid polypeptide reads, in one-letter code: uncharacterized protein (186 aa).

An N-terminal signal peptide occupies residues 1–28 (MSVKPAALFRISAALAVAGLGASLIASA).

This is an uncharacterized protein from Rhizobium meliloti (strain 1021) (Ensifer meliloti).